A 665-amino-acid chain; its full sequence is Prelamin-A/C (665 aa).

An N-acetylmethionine modification is found at M1. A disordered region spans residues 1–27; the sequence is METPSQRRPTRSGAQASSTPLSPTRIT. The head stretch occupies residues 1–33; sequence METPSQRRPTRSGAQASSTPLSPTRITRLQEKE. An interaction with MLIP region spans residues 1-130; the sequence is METPSQRRPT…TKKEGDLLAA (130 aa). T3 is modified (phosphothreonine). At S5 the chain carries Phosphoserine. Position 10 is a phosphothreonine (T10). Phosphoserine occurs at positions 12 and 18. T19 is subject to Phosphothreonine. Residue S22 is modified to Phosphoserine. The IF rod domain occupies 31–387; it reads EKEDLQELND…KLLEGEEERL (357 aa). Residue K32 is modified to N6-acetyllysine; alternate. An N6-succinyllysine; alternate modification is found at K32. Residue K32 forms a Glycyl lysine isopeptide (Lys-Gly) (interchain with G-Cter in SUMO2); alternate linkage. The interval 34 to 70 is coil 1A; it reads DLQELNDRLAVYIDRVRSLETENAGLRLRITESEEVV. Phosphoserine occurs at positions 51, 66, and 71. Residues 71–80 are linker 1; it reads SREVSGIKAA. Residues K78 and K97 each carry the N6-acetyllysine modification. Positions 81–218 are coil 1B; sequence YEAELGDARK…NIYSEELRET (138 aa). K97 is covalently cross-linked (Glycyl lysine isopeptide (Lys-Gly) (interchain with G-Cter in SUMO2)). S107 is modified (phosphoserine). N6-acetyllysine is present on residues K108, K114, K123, K135, K144, and K155. K171 is modified (N6-acetyllysine; alternate). K171 carries the post-translational modification N6-succinyllysine; alternate. K171 is covalently cross-linked (Glycyl lysine isopeptide (Lys-Gly) (interchain with G-Cter in SUMO2); alternate). N6-acetyllysine is present on residues K180, K201, and K208. A Glycyl lysine isopeptide (Lys-Gly) (interchain with G-Cter in SUMO2); alternate cross-link involves residue K201. Residue K201 forms a Glycyl lysine isopeptide (Lys-Gly) (interchain with G-Cter in SUMO); alternate linkage. K208 is covalently cross-linked (Glycyl lysine isopeptide (Lys-Gly) (interchain with G-Cter in SUMO2)). S212 carries the post-translational modification Phosphoserine. Residues K219 and K233 each participate in a glycyl lysine isopeptide (Lys-Gly) (interchain with G-Cter in SUMO2) cross-link. The tract at residues 219–242 is linker 2; that stretch reads KRRHETRLVEIDNGKQREFESRLA. N6-acetyllysine occurs at positions 233, 260, 265, and 270. Positions 243–383 are coil 2; the sequence is DALQELRAQH…HAYRKLLEGE (141 aa). K260 participates in a covalent cross-link: Glycyl lysine isopeptide (Lys-Gly) (interchain with G-Cter in SUMO2); alternate. K270 is covalently cross-linked (Glycyl lysine isopeptide (Lys-Gly) (interchain with G-Cter in SUMO2); alternate). S277, S282, S301, and S307 each carry phosphoserine. Residue K311 forms a Glycyl lysine isopeptide (Lys-Gly) (interchain with G-Cter in SUMO2); alternate linkage. K311, K316, and K341 each carry N6-acetyllysine. Glycyl lysine isopeptide (Lys-Gly) (interchain with G-Cter in SUMO2) cross-links involve residues K366 and K378. A disordered region spans residues 384-442; the sequence is EERLRLSPSPTSQRSRGRASSHSSQSQGGGSVTKKRKLESSESRSSFSQHARTSGRVAV. The tract at residues 384-665 is tail; that stretch reads EERLRLSPSP…TQSSQNCSIM (282 aa). S390, S392, S395, S398, S403, S404, S406, S407, S409, and S414 each carry phosphoserine. Residues 395–409 are compositionally biased toward low complexity; sequence SQRSRGRASSHSSQS. At T416 the chain carries Phosphothreonine. K417 is modified (N6-acetyllysine). Residues K417 and K420 each participate in a glycyl lysine isopeptide (Lys-Gly) (interchain with G-Cter in SUMO2) cross-link. The Nuclear localization signal motif lies at 417–422; that stretch reads KKRKLE. Residues S423, S426, S429, and S431 each carry the phosphoserine modification. The LTD domain maps to 428–545; sequence SSFSQHARTS…EEVAMRKLVR (118 aa). K450 is covalently cross-linked (Glycyl lysine isopeptide (Lys-Gly) (interchain with G-Cter in SUMO2); alternate). Residues K450 and K457 each carry the N6-acetyllysine modification. Residues S458 and S463 each carry the phosphoserine modification. Residues K470 and K486 each participate in a glycyl lysine isopeptide (Lys-Gly) (interchain with G-Cter in SUMO2) cross-link. K486 is modified (N6-acetyllysine). Position 496 is a phosphothreonine (T496). S500 carries the phosphoserine modification. Phosphothreonine is present on residues T505 and T510. S546 carries the post-translational modification Phosphoserine. A Phosphothreonine modification is found at T548. The span at 552–561 shows a compositional bias: acidic residues; that stretch reads DNDDEEEDGD. A disordered region spans residues 552–577; the sequence is DNDDEEEDGDELLHHHRGSHCSSSGD. S570 and S573 each carry phosphoserine. A Glycyl lysine isopeptide (Lys-Gly) (interchain with G-Cter in SUMO2); alternate cross-link involves residue K599. K599 participates in a covalent cross-link: Glycyl lysine isopeptide (Lys-Gly) (interchain with G-Cter in SUMO1); alternate. S613, S614, S617, and S620 each carry phosphoserine. 2 O-linked (GlcNAc) serine glycosylation sites follow: S626 and S629. Phosphoserine occurs at positions 629, 633, 637, and 653. Residues 648-662 constitute a propeptide, removed in Lamin-A/C form; that stretch reads LLGNSSPRTQSSQNC. Position 662 is a cysteine methyl ester (C662). C662 carries S-farnesyl cysteine lipidation. Positions 663–665 are cleaved as a propeptide — removed in Prelamin-A/C form and in Lamin-A/C form; that stretch reads SIM.

It belongs to the intermediate filament family. As to quaternary structure, homodimer of lamin A and lamin C. Lamin dimers then assemble into dimeric head-to-tail polymers. Ultimately, two head-to-tail polymers assemble laterally into a protofilament with a uniformly shaped rod of 3.5 nm in diameter. Interacts with lamin-associated polypeptides IA, IB and TMPO-alpha, RB1 and with emerin. Interacts with SREBF1, SREBF2, SUN2 and TMEM43. Interacts with TMEM201. Proteolytically processed isoform A interacts with NARF. Interacts with SUN1. Interacts with MLIP. Interacts with DMPK; may regulate nuclear envelope stability. Interacts with SUV39H1; the interaction increases stability of SUV39H1. Interacts with SYNE2. Interacts with ITSN1 isoform 2. Interacts with IFFO1; enables the formation of an interior nucleoskeleton that is recruited to DNA double-strand breaks. In terms of assembly, interacts with EMD. Interacts (via C-terminus) with LEMD2 (via N-terminus) (in vitro). In terms of processing, proteolytic cleavage of the C-terminal of 18 residues of prelamin-A/C results in the production of lamin-A/C. The prelamin-A/C maturation pathway includes farnesylation of CAAX motif by protein farnesyltransferase (FNTA and FNTB), removal of the last three amino acids (-AAX) by RCE1/FACE2 and/or ZMPSTE24, methylation of the C-terminal cysteine by ICMT and endoproteolytic removal of the last 15 C-terminal amino acids by ZMPSTE24. Proteolytic cleavage requires prior farnesylation and methylation, and absence of these blocks cleavage. Farnesylation of prelamin-A/C facilitates nuclear envelope targeting. Post-translationally, phosphorylation plays a key role in lamin organization, subcellular localization and nuclear envelope disintegration. Phosphorylation by CDK1 at Ser-22 and Ser-392 at the onset of mitosis drives lamin disassembly and nuclear envelope breakdown. Phosphorylation at Ser-22 and Ser-392 during interphase promotes localization to the nucleoplasm and regulates lamina assembly. Phosphorylation at Ser-22, Ser-392 and Ser-629 during interphase causes redistribution between the nucleus and the cytoplasm. Phosphorylation at Ser-22 by CDK1 regulates matrix stiffness. Phosphorylation status of Ser-22 determines its localization between double-strand break (DSB) sites and the nuclear matrix. Phosphorylated by ATR at Ser-282 in response to DNA damage, leading to lamin disassembly and nuclear envelope rupture. Phosphorylation also regulates stability in micronuclei arising from genome instability: phosphorylation at Ser-395 by ATR in response to genome instability and double-stranded DNA breaks primes LMNA for subsequent phosphorylation at Ser-392 by CDK1 and micronuclei envelope rupture. The rupture of micronuclear envelope triggers the cGAS-STING pathway thereby activating the type I interferon response and innate immunity. In terms of processing, acetylation by KAT8 is required for nuclear architecture. Sumoylation is necessary for the localization to the nuclear envelope.

The protein localises to the nucleus lamina. It is found in the nucleus envelope. The protein resides in the nucleus. It localises to the nucleoplasm. Its subcellular location is the nucleus matrix. Lamins are intermediate filament proteins that assemble into a filamentous meshwork, and which constitute the major components of the nuclear lamina, a fibrous layer on the nucleoplasmic side of the inner nuclear membrane. Lamins provide a framework for the nuclear envelope, bridging the nuclear envelope and chromatin, thereby playing an important role in nuclear assembly, chromatin organization, nuclear membrane and telomere dynamics. Lamin A and C also regulate matrix stiffness by conferring nuclear mechanical properties. The structural integrity of the lamina is strictly controlled by the cell cycle, as seen by the disintegration and formation of the nuclear envelope in prophase and telophase, respectively. Lamin A and C are present in equal amounts in the lamina of mammals. Also invoved in DNA repair: recruited by DNA repair proteins XRCC4 and IFFO1 to the DNA double-strand breaks (DSBs) to prevent chromosome translocation by immobilizing broken DNA ends. Required for normal development of peripheral nervous system and skeletal muscle and for muscle satellite cell proliferation. Required for osteoblastogenesis and bone formation. Also prevents fat infiltration of muscle and bone marrow, helping to maintain the volume and strength of skeletal muscle and bone. Required for cardiac homeostasis. Its function is as follows. Prelamin-A/C can accelerate smooth muscle cell senescence. It acts to disrupt mitosis and induce DNA damage in vascular smooth muscle cells (VSMCs), leading to mitotic failure, genomic instability, and premature senescence. The sequence is that of Prelamin-A/C (Lmna) from Rattus norvegicus (Rat).